The sequence spans 142 residues: Alpha-lactalbumin (142 aa).

An N-terminal signal peptide occupies residues 1–18 (MMSFVSLLLVGILFHATQ). The C-type lysozyme domain occupies 20–142 (EQLTKCEVFR…KLDQWLCEKL (123 aa)). 4 disulfides stabilise this stretch: C25–C139, C47–C130, C80–C96, and C92–C110. 2 N-linked (GlcNAc...) asparagine glycosylation sites follow: N64 and N93. The Ca(2+) site is built by K98, D101, D103, D106, and D107.

This sequence belongs to the glycosyl hydrolase 22 family. As to quaternary structure, lactose synthase (LS) is a heterodimer of a catalytic component, beta1,4-galactosyltransferase (beta4Gal-T1) and a regulatory component, alpha-lactalbumin (LA). As to expression, mammary gland specific. Secreted in milk.

It localises to the secreted. In terms of biological role, regulatory subunit of lactose synthase, changes the substrate specificity of galactosyltransferase in the mammary gland making glucose a good acceptor substrate for this enzyme. This enables LS to synthesize lactose, the major carbohydrate component of milk. In other tissues, galactosyltransferase transfers galactose onto the N-acetylglucosamine of the oligosaccharide chains in glycoproteins. The sequence is that of Alpha-lactalbumin (LALBA) from Bubalus bubalis (Domestic water buffalo).